The following is a 109-amino-acid chain: Large ribosomal subunit protein uL24 (109 aa).

The protein belongs to the universal ribosomal protein uL24 family. In terms of assembly, part of the 50S ribosomal subunit.

Functionally, one of two assembly initiator proteins, it binds directly to the 5'-end of the 23S rRNA, where it nucleates assembly of the 50S subunit. One of the proteins that surrounds the polypeptide exit tunnel on the outside of the subunit. This is Large ribosomal subunit protein uL24 from Rickettsia africae (strain ESF-5).